Here is a 344-residue protein sequence, read N- to C-terminus: Cytochrome c biogenesis protein CcsA (344 aa).

8 helical membrane passes run 21–41 (NVAF…AAFP), 45–65 (LLSE…AALL), 80–100 (LYES…LALH), 106–126 (WVGV…ALAL), 151–171 (VMLL…AFLI), 252–272 (LIGL…VWAN), 287–307 (WALI…TKGW), and 313–333 (ALLA…VNFL).

The protein belongs to the CcmF/CycK/Ccl1/NrfE/CcsA family. May interact with ccs1.

It is found in the cellular thylakoid membrane. Functionally, required during biogenesis of c-type cytochromes (cytochrome c6 and cytochrome f) at the step of heme attachment. This is Cytochrome c biogenesis protein CcsA from Synechococcus sp. (strain JA-3-3Ab) (Cyanobacteria bacterium Yellowstone A-Prime).